Here is a 131-residue protein sequence, read N- to C-terminus: Large ribosomal subunit protein bL17 (131 aa).

The protein belongs to the bacterial ribosomal protein bL17 family. As to quaternary structure, part of the 50S ribosomal subunit. Contacts protein L32.

The chain is Large ribosomal subunit protein bL17 from Shewanella oneidensis (strain ATCC 700550 / JCM 31522 / CIP 106686 / LMG 19005 / NCIMB 14063 / MR-1).